A 264-amino-acid chain; its full sequence is Thymidylate synthase (264 aa).

R21 contributes to the dUMP binding site. H51 is a (6R)-5,10-methylene-5,6,7,8-tetrahydrofolate binding site. 126–127 (RR) is a dUMP binding site. C146 functions as the Nucleophile in the catalytic mechanism. DUMP-binding positions include 166 to 169 (RSCD), N177, and 207 to 209 (HLY). D169 is a (6R)-5,10-methylene-5,6,7,8-tetrahydrofolate binding site. A263 contacts (6R)-5,10-methylene-5,6,7,8-tetrahydrofolate.

It belongs to the thymidylate synthase family. Bacterial-type ThyA subfamily. In terms of assembly, homodimer.

The protein resides in the cytoplasm. The enzyme catalyses dUMP + (6R)-5,10-methylene-5,6,7,8-tetrahydrofolate = 7,8-dihydrofolate + dTMP. The protein operates within pyrimidine metabolism; dTTP biosynthesis. Functionally, catalyzes the reductive methylation of 2'-deoxyuridine-5'-monophosphate (dUMP) to 2'-deoxythymidine-5'-monophosphate (dTMP) while utilizing 5,10-methylenetetrahydrofolate (mTHF) as the methyl donor and reductant in the reaction, yielding dihydrofolate (DHF) as a by-product. This enzymatic reaction provides an intracellular de novo source of dTMP, an essential precursor for DNA biosynthesis. The polypeptide is Thymidylate synthase (Shewanella amazonensis (strain ATCC BAA-1098 / SB2B)).